The chain runs to 213 residues: Thymidylate kinase (213 aa).

ATP is bound at residue 10–17 (GLEGAGKT).

It belongs to the thymidylate kinase family.

It catalyses the reaction dTMP + ATP = dTDP + ADP. Its function is as follows. Phosphorylation of dTMP to form dTDP in both de novo and salvage pathways of dTTP synthesis. This is Thymidylate kinase from Salmonella choleraesuis (strain SC-B67).